The sequence spans 462 residues: MSKAHIIGFGKSGVAAARLLKKNGWEVELSDRNTSDSLQQKEKQLTQEGITVKLNYSFEPETSLDLVIVSPGVPWDLPALQRSRETGIETIGEMELAWRYLKSSSWVGITGTNGKTTTTALTAAIFQTAGLYAPACGNIGYAACELALQDTLPDWVIAEISSYQIESSNTLSPQIAVWTTFTADHLSRHYNLENYFNIKADLLNRSQIQILNGDDYYLHENAAHLYHNSYWTSIQGKANLVADVTRGIYLEDGWVVALQEKIIPVELLQMLGSHNQQNLLMAVAVAKFAGIENEAIAEAVKNFPGVPHRLEYICRWNGVDFINDSKATNYDAAAMGLKALVAPILLIAGGEAKEGNDNDWLRQIKEKVVFVLLIGSAAEFLAKRLQKINFLNYEIVENMERAVIRGAALSKKYDAKTVLLSPACASFDQYQNFEERGEVFRQLSLGLNHKKKNDIRFGSSRI.

111-117 (GTNGKTT) contributes to the ATP binding site.

This sequence belongs to the MurCDEF family.

Its subcellular location is the cytoplasm. The enzyme catalyses UDP-N-acetyl-alpha-D-muramoyl-L-alanine + D-glutamate + ATP = UDP-N-acetyl-alpha-D-muramoyl-L-alanyl-D-glutamate + ADP + phosphate + H(+). It functions in the pathway cell wall biogenesis; peptidoglycan biosynthesis. Functionally, cell wall formation. Catalyzes the addition of glutamate to the nucleotide precursor UDP-N-acetylmuramoyl-L-alanine (UMA). The sequence is that of UDP-N-acetylmuramoylalanine--D-glutamate ligase from Trichodesmium erythraeum (strain IMS101).